We begin with the raw amino-acid sequence, 399 residues long: Succinyl-diaminopimelate desuccinylase (399 aa).

Position 80 (His-80) interacts with Zn(2+). Asp-82 is an active-site residue. Zn(2+) is bound at residue Asp-113. The active-site Proton acceptor is Glu-147. Zn(2+) is bound by residues Glu-148, Glu-176, and His-366.

This sequence belongs to the peptidase M20A family. DapE subfamily. Homodimer. The cofactor is Zn(2+). Requires Co(2+) as cofactor.

The catalysed reaction is N-succinyl-(2S,6S)-2,6-diaminopimelate + H2O = (2S,6S)-2,6-diaminopimelate + succinate. Its pathway is amino-acid biosynthesis; L-lysine biosynthesis via DAP pathway; LL-2,6-diaminopimelate from (S)-tetrahydrodipicolinate (succinylase route): step 3/3. In terms of biological role, catalyzes the hydrolysis of N-succinyl-L,L-diaminopimelic acid (SDAP), forming succinate and LL-2,6-diaminopimelate (DAP), an intermediate involved in the bacterial biosynthesis of lysine and meso-diaminopimelic acid, an essential component of bacterial cell walls. The chain is Succinyl-diaminopimelate desuccinylase from Colwellia psychrerythraea (strain 34H / ATCC BAA-681) (Vibrio psychroerythus).